The following is an 83-amino-acid chain: Small ribosomal subunit protein bS18 (83 aa).

Residues 1–23 (MKQRNNAKRVRLEQTRRPKKNPL) are disordered.

This sequence belongs to the bacterial ribosomal protein bS18 family. In terms of assembly, part of the 30S ribosomal subunit. Forms a tight heterodimer with protein bS6.

Functionally, binds as a heterodimer with protein bS6 to the central domain of the 16S rRNA, where it helps stabilize the platform of the 30S subunit. The protein is Small ribosomal subunit protein bS18 of Corynebacterium efficiens (strain DSM 44549 / YS-314 / AJ 12310 / JCM 11189 / NBRC 100395).